The chain runs to 148 residues: MNLSNLKPAEGSTKTRKRIGRGPGSGLGGTSTRGHKGAKSRSGYSKKIGFEGGQMPLQRRVPKFGFKNINRVEYKAINLETIQKLAEAKNLTKVGMNDFIEAGFISSNQLVKVLGNGSLTTKLDVEANAFSKSAVAAIEAVGGNAVKL.

Residues 1–51 (MNLSNLKPAEGSTKTRKRIGRGPGSGLGGTSTRGHKGAKSRSGYSKKIGFE) form a disordered region. The span at 21-31 (RGPGSGLGGTS) shows a compositional bias: gly residues.

It belongs to the universal ribosomal protein uL15 family. Part of the 50S ribosomal subunit.

Functionally, binds to the 23S rRNA. This chain is Large ribosomal subunit protein uL15, found in Phocaeicola vulgatus (strain ATCC 8482 / DSM 1447 / JCM 5826 / CCUG 4940 / NBRC 14291 / NCTC 11154) (Bacteroides vulgatus).